The chain runs to 325 residues: uncharacterized protein (325 aa).

The interval 1–75 is disordered; it reads MSQPPEHPGN…PPPGYPTHLQ (75 aa). Residues 24–70 are compositionally biased toward pro residues; sequence YPPPGYGAPPPPPGYGPPPGTYLPPGYNAPPPPPGYGPPPGPPPPGY. The next 4 membrane-spanning stretches (helical) occupy residues 96–116, 153–173, 205–225, and 273–293; these read AVTL…VIGA, IVMF…HAGI, LLIV…GLIF, and LVGE…AALI.

It is found in the cell membrane. This is an uncharacterized protein from Mycobacterium tuberculosis (strain ATCC 25618 / H37Rv).